A 74-amino-acid chain; its full sequence is Large ribosomal subunit protein bL31 (74 aa).

Positions 16, 18, 38, and 41 each coordinate Zn(2+).

The protein belongs to the bacterial ribosomal protein bL31 family. Type A subfamily. In terms of assembly, part of the 50S ribosomal subunit. It depends on Zn(2+) as a cofactor.

Binds the 23S rRNA. This Streptomyces coelicolor (strain ATCC BAA-471 / A3(2) / M145) protein is Large ribosomal subunit protein bL31 (rpmE).